An 84-amino-acid chain; its full sequence is Small ribosomal subunit protein uS17 (84 aa).

Belongs to the universal ribosomal protein uS17 family. Part of the 30S ribosomal subunit.

Its function is as follows. One of the primary rRNA binding proteins, it binds specifically to the 5'-end of 16S ribosomal RNA. The sequence is that of Small ribosomal subunit protein uS17 from Sodalis glossinidius (strain morsitans).